The sequence spans 603 residues: MVMKQTKQTNILAGAAVIKVLEAWGVDHLYGIPGGSINSIMDALSAERDRIHYIQVRHEEVGAMAAAADAKLTGKIGVCFGSAGPGGTHLMNGLYDAREDHVPVLALIGQFGTTGMNMDTFQEMNENPIYADVADYNVTAVNAATLPHVIDEAIRRAYAHQGVAVVQIPVDLPWQQIPAEDWYASANSYQTPLLPEPDVQAVTRLTQTLLAAERPLIYYGIGARKAGKELEQLSKTLKIPLMSTYPAKGIVADRYPAYLGSANRVAQKPANEALAQADVVLFVGNNYPFAEVSKAFKNTRYFLQIDIDPAKLGKRHKTDIAVLADAQKTLAAILAQVSERESTPWWQANLANVKNWRAYLASLEDKQEGPLQAYQVLRAVNKIAEPDAIYSIDVGDINLNANRHLKLTPSNRHITSNLFATMGVGIPGAIAAKLNYPERQVFNLAGDGGASMTMQDLATQVQYHLPVINVVFTNCQYGFIKDEQEDTNQNDFIGVEFNDIDFSKIADGVHMQAFRVNKIEQLPDVFEQAKAIAQHEPVLIDAVITGDRPLPAEKLRLDSATSSAADIEAFKQRYEAQDLQPLSTYLKQFGLDDLQHQIGQGGF.

A core region spans residues 1–191; sequence MVMKQTKQTN…WYASANSYQT (191 aa). The FAD-binding stretch occupies residues 192 to 342; it reads PLLPEPDVQA…ILAQVSERES (151 aa). The thiamine pyrophosphate binding stretch occupies residues 343–603; it reads TPWWQANLAN…LQHQIGQGGF (261 aa). Mg(2+)-binding residues include aspartate 447, asparagine 474, and glutamine 476.

The protein belongs to the TPP enzyme family. As to quaternary structure, homotetramer. It depends on FAD as a cofactor. Requires Mg(2+) as cofactor. The cofactor is thiamine diphosphate.

It carries out the reaction pyruvate + phosphate + O2 + H(+) = acetyl phosphate + H2O2 + CO2. In terms of biological role, important for the aerobic growth. Decarboxylates pyruvate in four steps. The energy released is partially stored in acetyl phosphate. In Lactiplantibacillus plantarum (strain ATCC BAA-793 / NCIMB 8826 / WCFS1) (Lactobacillus plantarum), this protein is Pyruvate oxidase (pox5).